The primary structure comprises 186 residues: TATA-box-binding protein 2 (186 aa).

A run of 2 repeats spans residues 10–86 (IQNV…FDKL) and 101–179 (VQNI…VERI). Residues K53 and K63 each participate in a glycyl lysine isopeptide (Lys-Gly) (interchain with G-Cter in SAMP2) cross-link.

It belongs to the TBP family.

In terms of biological role, general factor that plays a role in the activation of archaeal genes transcribed by RNA polymerase. Binds specifically to the TATA box promoter element which lies close to the position of transcription initiation. This chain is TATA-box-binding protein 2 (tbp2), found in Haloferax volcanii (strain ATCC 29605 / DSM 3757 / JCM 8879 / NBRC 14742 / NCIMB 2012 / VKM B-1768 / DS2) (Halobacterium volcanii).